We begin with the raw amino-acid sequence, 192 residues long: Inosine triphosphate pyrophosphatase (192 aa).

10-15 (TGNANK) provides a ligand contact to ITP. Mg(2+) is bound at residue E46. ITP is bound by residues K58, 74–75 (DT), K91, 149–152 (FGWD), K172, and 177–178 (HR).

Belongs to the HAM1 NTPase family. Homodimer. The cofactor is Mg(2+). Mn(2+) serves as cofactor.

Its subcellular location is the cytoplasm. The protein resides in the nucleus. The catalysed reaction is ITP + H2O = IMP + diphosphate + H(+). It carries out the reaction dITP + H2O = dIMP + diphosphate + H(+). It catalyses the reaction XTP + H2O = XMP + diphosphate + H(+). Its function is as follows. Pyrophosphatase that hydrolyzes non-canonical purine nucleotides such as inosine triphosphate (ITP), deoxyinosine triphosphate (dITP) or xanthosine 5'-triphosphate (XTP) to their respective monophosphate derivatives. The enzyme does not distinguish between the deoxy- and ribose forms. Probably excludes non-canonical purines from RNA and DNA precursor pools, thus preventing their incorporation into RNA and DNA and avoiding chromosomal lesions. This Puccinia graminis f. sp. tritici (strain CRL 75-36-700-3 / race SCCL) (Black stem rust fungus) protein is Inosine triphosphate pyrophosphatase.